Reading from the N-terminus, the 323-residue chain is Acetyl-coenzyme A carboxylase carboxyl transferase subunit alpha (323 aa).

A CoA carboxyltransferase C-terminal domain is found at 39–293; that stretch reads RLSKKSQQLT…RRALADSLRQ (255 aa).

It belongs to the AccA family. In terms of assembly, acetyl-CoA carboxylase is a heterohexamer composed of biotin carboxyl carrier protein (AccB), biotin carboxylase (AccC) and two subunits each of ACCase subunit alpha (AccA) and ACCase subunit beta (AccD).

Its subcellular location is the cytoplasm. The catalysed reaction is N(6)-carboxybiotinyl-L-lysyl-[protein] + acetyl-CoA = N(6)-biotinyl-L-lysyl-[protein] + malonyl-CoA. The protein operates within lipid metabolism; malonyl-CoA biosynthesis; malonyl-CoA from acetyl-CoA: step 1/1. Component of the acetyl coenzyme A carboxylase (ACC) complex. First, biotin carboxylase catalyzes the carboxylation of biotin on its carrier protein (BCCP) and then the CO(2) group is transferred by the carboxyltransferase to acetyl-CoA to form malonyl-CoA. The chain is Acetyl-coenzyme A carboxylase carboxyl transferase subunit alpha from Burkholderia vietnamiensis (strain G4 / LMG 22486) (Burkholderia cepacia (strain R1808)).